Reading from the N-terminus, the 264-residue chain is MALVVKGKVNINEFIDLSKSEKLLPSMFTPVKSVMVSKVDKIMVHENESLSEVNLLKGVKLIEGGYVCLVGLVVSGEWNLPDNCRGGVSVCLVDKRMERADEATLGSYYTAAAKKRFQFKVVPNYGITTKDAEKNIWQVLVNIKNVKMSAGYCPLSLEFVSVCIVYKNNTKLGLREKVTSVNDGGPMELSEEVVDEFMENVPMSVRLAKFRTKSSKRGPKNNNNLGKGRSGGRPKPKSFDEVEKEFDNLIEDEAETSVADSDSY.

Residues 211-264 (RTKSSKRGPKNNNNLGKGRSGGRPKPKSFDEVEKEFDNLIEDEAETSVADSDSY) form a disordered region. Over residues 237–247 (KSFDEVEKEFD) the composition is skewed to basic and acidic residues.

Belongs to the tobamovirus movement protein family. As to quaternary structure, binds to host RBCS at the plasmodesmata; this interaction seems required for viral systemic movement. In resistant plants, interacts with host MBP2C at host microtubules; this interaction prevents virus cell to cell movement. In resistant plants, interacts with host resistance (R) protein (e.g. tomato ToMV resistance protein TM-2(2), AC Q71BG9) at the host plasma membrane; this interaction triggers host defense responses leading to programmed cell death.

It is found in the host cytoplasm. The protein localises to the host cytoskeleton. The protein resides in the host cell junction. It localises to the host plasmodesma. Transports viral genome to neighboring plant cells directly through plasmosdesmata, without any budding. The movement protein allows efficient cell to cell propagation, by bypassing the host cell wall barrier. Forms a ribonucleoprotein complex with viral RNA. Binds microtubules and modulates microtubule stability. Can bind double-stranded DNA. Triggers host hypersensitive defense reaction in incompatible plants harboring resistance (R) proteins. The chain is Movement protein (MP) from Tomato mosaic virus (strain S-1) (ToMV).